Consider the following 272-residue polypeptide: HMP-PP phosphatase (272 aa).

Asp-8 functions as the Nucleophile in the catalytic mechanism. Mg(2+) contacts are provided by Asp-8, Asp-10, and Asp-212.

The protein belongs to the HAD-like hydrolase superfamily. Cof family. It depends on Mg(2+) as a cofactor.

The enzyme catalyses 4-amino-2-methyl-5-(diphosphooxymethyl)pyrimidine + H2O = 4-amino-2-methyl-5-(phosphooxymethyl)pyrimidine + phosphate + H(+). Its function is as follows. Catalyzes the hydrolysis of 4-amino-2-methyl-5-hydroxymethylpyrimidine pyrophosphate (HMP-PP) to 4-amino-2-methyl-5-hydroxymethylpyrimidine phosphate (HMP-P). The chain is HMP-PP phosphatase from Citrobacter koseri (strain ATCC BAA-895 / CDC 4225-83 / SGSC4696).